The chain runs to 525 residues: ADP-ribosylation factor GTPase-activating protein 3 (525 aa).

An Arf-GAP domain is found at 10–126; the sequence is LAIFKRLRSV…IKTLATQATR (117 aa). The C4-type zinc-finger motif lies at 25-48; the sequence is CFDCGAKNPSWASISYGVFLCIDC. The disordered stretch occupies residues 160 to 233; that stretch reads VSGATQASAQ…KGLGAKKGSL (74 aa). Residues 162–177 show a composition bias toward polar residues; it reads GATQASAQPEPASSTP. Residues 222–233 are compositionally biased toward low complexity; sequence AKKGLGAKKGSL. 4 positions are modified to phosphoserine: S232, S242, S271, and S275. Positions 249–271 are disordered; it reads QAQAVDKRKEQEDLARGTPKEES. Positions 293 to 305 are enriched in basic and acidic residues; sequence LNLSGQKKAEAER. Disordered regions lie at residues 293-364 and 377-428; these read LNLS…SSSR and FSSW…EAQK. Residues 319 to 333 are compositionally biased toward polar residues; it reads HSVTSDMQTIEQESP. S332 is subject to Phosphoserine. Residues 349–363 show a composition bias toward low complexity; sequence SYFSSSSKWSEQSSS. Phosphoserine is present on S379. Positions 387–398 are enriched in basic and acidic residues; that stretch reads YWKKDSSRDPEP. Phosphoserine occurs at positions 437, 460, 462, 464, 466, and 467.

The protein resides in the cytoplasm. It localises to the golgi apparatus membrane. GAP activity stimulated by phosphatidylinositol 4,5-bisphosphate (PIP2). In terms of biological role, GTPase-activating protein (GAP) for ADP ribosylation factor 1 (ARF1). Hydrolysis of ARF1-bound GTP may lead to dissociation of coatomer from Golgi-derived membranes to allow fusion with target membranes. The protein is ADP-ribosylation factor GTPase-activating protein 3 of Rattus norvegicus (Rat).